The primary structure comprises 483 residues: V-type proton ATPase subunit H (483 aa).

A phosphoserine mark is found at Ser59 and Ser483.

The protein belongs to the V-ATPase H subunit family. As to quaternary structure, V-ATPase is a heteromultimeric enzyme made up of two complexes: the ATP-hydrolytic V1 complex and the proton translocation V0 complex. The V1 complex consists of three catalytic AB heterodimers that form a heterohexamer, three peripheral stalks each consisting of EG heterodimers, one central rotor including subunits D and F, and the regulatory subunits C and H. The proton translocation complex V0 consists of the proton transport subunit a, a ring of proteolipid subunits c9c'', rotary subunit d, subunits e and f, and the accessory subunits ATP6AP1/Ac45 and ATP6AP2/PRR. Interacts with AP2M1.

It localises to the cytoplasmic vesicle. The protein resides in the clathrin-coated vesicle membrane. Its function is as follows. Subunit of the V1 complex of vacuolar(H+)-ATPase (V-ATPase), a multisubunit enzyme composed of a peripheral complex (V1) that hydrolyzes ATP and a membrane integral complex (V0) that translocates protons. V-ATPase is responsible for acidifying and maintaining the pH of intracellular compartments and in some cell types, is targeted to the plasma membrane, where it is responsible for acidifying the extracellular environment. Subunit H is essential for V-ATPase activity, but not for the assembly of the complex. Involved in the endocytosis mediated by clathrin-coated pits, required for the formation of endosomes. The sequence is that of V-type proton ATPase subunit H (Atp6v1h) from Mus musculus (Mouse).